The primary structure comprises 474 residues: UDP-N-acetylmuramate--L-alanine ligase (474 aa).

G123–T129 serves as a coordination point for ATP.

The protein belongs to the MurCDEF family.

Its subcellular location is the cytoplasm. The enzyme catalyses UDP-N-acetyl-alpha-D-muramate + L-alanine + ATP = UDP-N-acetyl-alpha-D-muramoyl-L-alanine + ADP + phosphate + H(+). The protein operates within cell wall biogenesis; peptidoglycan biosynthesis. Functionally, cell wall formation. The polypeptide is UDP-N-acetylmuramate--L-alanine ligase (Alcanivorax borkumensis (strain ATCC 700651 / DSM 11573 / NCIMB 13689 / SK2)).